The chain runs to 293 residues: ATP synthase gamma chain (293 aa).

This sequence belongs to the ATPase gamma chain family. F-type ATPases have 2 components, CF(1) - the catalytic core - and CF(0) - the membrane proton channel. CF(1) has five subunits: alpha(3), beta(3), gamma(1), delta(1), epsilon(1). CF(0) has three main subunits: a, b and c.

The protein resides in the cell inner membrane. Functionally, produces ATP from ADP in the presence of a proton gradient across the membrane. The gamma chain is believed to be important in regulating ATPase activity and the flow of protons through the CF(0) complex. The sequence is that of ATP synthase gamma chain from Leptothrix cholodnii (strain ATCC 51168 / LMG 8142 / SP-6) (Leptothrix discophora (strain SP-6)).